A 98-amino-acid polypeptide reads, in one-letter code: Alpha-defensin 1 (98 aa).

The first 19 residues, 1 to 19 (MRTLTLLTALLLLALQVQT), serve as a signal peptide directing secretion. Residues 20–63 (QSLEETADQVPAQDQPGAEAQDITISFAGDERSAREASKSLIGT) constitute a propeptide that is removed on maturation. Disulfide bonds link cysteine 66/cysteine 96, cysteine 68/cysteine 84, and cysteine 74/cysteine 95.

It belongs to the alpha-defensin family. As to expression, paneth cells of the small bowel.

The protein resides in the secreted. Its function is as follows. Has broad-spectrum antimicrobial properties. The antimicrobial activity decreases in the present of salt in vitro. Binds anionic phospholipids, which leads to the aggregation of liposomes in vitro. Membrane permeabilization of the target cells is an essential part of the peptide's mode of antimicrobial activity. No hemolytic activity against sheep or horse erythrocytes. Has antibacterial activity against the bacterial horse pathogens Gram-positive R.equi ATCC 33701 P(-) (minimum bactericidal concentration or MBC=5 ug/ml) and R.equi ATCC 33701 P(+) (MBC=5 ug/ml), which are resistant against beta-lactam antibiotics. Also has antibacterial activity against highly infectious wild-type strain R.equi 85F P(+) (MBC=5 ug/ml), S.equi subsp. equi (MBC=5 ug/ml), S.equi subsp. zooepidemicus (MBC=5 ug/ml), S.dysgalactiae subsp. equisimilis (MBC=10 ug/ml), S.choleraesuis subsp. choleraesuis serovar Typhimurium (MBC=10 ug/ml), and P.multocida subsp. multocida (MBC=&gt;10 ug/ml). Probably contributes to the antimicrobial barrier function of the small bowel mucosa. The chain is Alpha-defensin 1 from Equus caballus (Horse).